The chain runs to 346 residues: Phospholipase A1 (346 aa).

Residues 1–26 (MRKFAAIFVVFFVQCTHLYSLAQARA) form the signal peptide. The propeptide occupies 27–37 (EPDPGVVEYLK). 2 N-linked (GlcNAc...) asparagine glycosylation sites follow: Asn-44 and Asn-72. The active-site Nucleophile is the Ser-167. N-linked (GlcNAc...) asparagine glycosylation is present at Asn-185. Active-site charge relay system residues include Asp-195 and His-258.

It belongs to the AB hydrolase superfamily. Lipase family. Contains six disulfide bonds. Post-translationally, N-glycosylated; contains mannose. As to expression, expressed by the venom gland.

It localises to the secreted. It catalyses the reaction a 1,2-diacyl-sn-glycero-3-phosphocholine + H2O = a 2-acyl-sn-glycero-3-phosphocholine + a fatty acid + H(+). Functionally, catalyzes the hydrolysis of phosphatidylcholine with phospholipase A1 activity. Induces hemolytic activity. Acts as an allergen. The protein is Phospholipase A1 of Solenopsis invicta (Red imported fire ant).